The following is a 365-amino-acid chain: 7-methylxanthine methyltransferase PCS1 (365 aa).

Tyr19 contacts S-adenosyl-L-homocysteine. Thr26 is a caffeine binding site. 6 residues coordinate S-adenosyl-L-homocysteine: Cys62, Asn67, Asp99, Leu100, Ser134, and Phe135. Residues Tyr152, His155, and Trp156 each coordinate caffeine. A Mg(2+)-binding site is contributed by Asn173. His221 is a binding site for caffeine. Mg(2+)-binding residues include Asp259, Phe261, and Asn262. Phe317 serves as a coordination point for caffeine.

This sequence belongs to the methyltransferase superfamily. Type-7 methyltransferase family. Mg(2+) is required as a cofactor.

The enzyme catalyses 1,7-dimethylxanthine + S-adenosyl-L-methionine = caffeine + S-adenosyl-L-homocysteine + H(+). The catalysed reaction is 7-methylxanthine + S-adenosyl-L-methionine = theobromine + S-adenosyl-L-homocysteine + H(+). It functions in the pathway alkaloid biosynthesis. Functionally, involved in the biosynthesis of caffeine. Catalyzes the conversion of 7-methylxanthine (7mX) to theobromine, and, to some extent, the conversion of paraxanthine to caffeine, but seems not able to convert theobromine to caffeine. The sequence is that of 7-methylxanthine methyltransferase PCS1 from Camellia ptilophylla (Cocoa tea).